A 146-amino-acid chain; its full sequence is Hemoglobin subunit beta (146 aa).

An N-acetylvaline modification is found at V1. The Globin domain maps to 2–146 (HLTGEEKAAV…VANALAHKYH (145 aa)). T12 is subject to Phosphothreonine. Residue S44 is modified to Phosphoserine. Residue K59 is modified to N6-acetyllysine. H63 contributes to the heme b binding site. K82 is subject to N6-acetyllysine. Residue H92 coordinates heme b. S-nitrosocysteine is present on C93. The residue at position 144 (K144) is an N6-acetyllysine.

This sequence belongs to the globin family. In terms of assembly, heterotetramer of two alpha chains and two beta chains. Red blood cells.

Involved in oxygen transport from the lung to the various peripheral tissues. The chain is Hemoglobin subunit beta (HBB) from Aotus trivirgatus (Three-striped night monkey).